Reading from the N-terminus, the 248-residue chain is Probable transcriptional regulatory protein RPB_4273 (248 aa).

The segment at 1–22 (MAGHSQFKNIMHRKGKQDAQRS) is disordered.

This sequence belongs to the TACO1 family.

The protein resides in the cytoplasm. This is Probable transcriptional regulatory protein RPB_4273 from Rhodopseudomonas palustris (strain HaA2).